A 183-amino-acid chain; its full sequence is Inosine/xanthosine triphosphatase (183 aa).

The protein belongs to the YjjX NTPase family. In terms of assembly, homodimer. Mg(2+) is required as a cofactor. It depends on Mn(2+) as a cofactor.

It catalyses the reaction XTP + H2O = XDP + phosphate + H(+). It carries out the reaction ITP + H2O = IDP + phosphate + H(+). Phosphatase that hydrolyzes non-canonical purine nucleotides such as XTP and ITP to their respective diphosphate derivatives. Probably excludes non-canonical purines from DNA/RNA precursor pool, thus preventing their incorporation into DNA/RNA and avoiding chromosomal lesions. This Vibrio cholerae serotype O1 (strain ATCC 39315 / El Tor Inaba N16961) protein is Inosine/xanthosine triphosphatase.